Here is a 1037-residue protein sequence, read N- to C-terminus: Tyrosine-protein kinase-like otk (1037 aa).

The signal sequence occupies residues 1–22 (MAALRISVWILVQALMMALVSS). N-linked (GlcNAc...) asparagine glycosylation is found at Asn-23 and Asn-39. Residues 23-582 (NSSHFLQLPQ…GGDGFLVTRA (560 aa)) are Extracellular-facing. Ig-like C2-type domains are found at residues 25 to 115 (SHFL…AKLS), 114 to 200 (LSVI…RVMS), 252 to 366 (PEDL…APIN), 369 to 464 (PGTL…VAIN), and 469 to 559 (PKFS…VQLV). 4 cysteine pairs are disulfide-bonded: Cys-46-Cys-96, Cys-138-Cys-189, Cys-277-Cys-355, and Cys-400-Cys-448. N-linked (GlcNAc...) asparagine glycosylation is found at Asn-337, Asn-418, Asn-430, Asn-445, Asn-458, Asn-513, and Asn-525. Cys-491 and Cys-543 are oxidised to a cystine. Residues 583–603 (VLITMTVALAYIVLVVGLMLW) traverse the membrane as a helical segment. The Cytoplasmic portion of the chain corresponds to 604–1037 (CRYRRQARKA…LSKAMQSLEK (434 aa)). Disordered regions lie at residues 618–681 (LSTK…KKSA) and 719–764 (ATGS…KTSM). Polar residues predominate over residues 653–675 (QSRSKSNGDAQKSDDTACSQQSR). Ser-680 carries the post-translational modification Phosphoserine. The Protein kinase; inactive domain maps to 694 to 1035 (LTELIQIGRG…AALSKAMQSL (342 aa)). A compositionally biased stretch (basic and acidic residues) spans 724-735 (SDKDADTEKQHS).

The protein belongs to the protein kinase superfamily. Tyr protein kinase family. Insulin receptor subfamily. In terms of assembly, interacts with plexA; component of a receptor complex that mediates the repulsive signaling in response to Semaphorin ligands.

It localises to the cell membrane. Acts as a calcium-dependent, homophilic cell adhesion molecule that regulates neural recognition during the development of the nervous system. Component of the repulsive Plexin signaling response to regulate motor axon guidance at the embryonic stage. Also component of a receptor complex that is required in the adult visual system to innervate the lamina layer; specific targeting of R1-R6 axons. The polypeptide is Tyrosine-protein kinase-like otk (Drosophila ananassae (Fruit fly)).